The following is a 568-amino-acid chain: Urease subunit alpha (568 aa).

The Urease domain occupies Gly-131–Phe-568. The Ni(2+) site is built by His-136, His-138, and Lys-219. Lys-219 bears the N6-carboxylysine mark. Residue His-221 coordinates substrate. Residues His-248 and His-274 each coordinate Ni(2+). Residue His-322 is the Proton donor of the active site. Asp-362 contacts Ni(2+).

Belongs to the metallo-dependent hydrolases superfamily. Urease alpha subunit family. Heterotrimer of UreA (gamma), UreB (beta) and UreC (alpha) subunits. Three heterotrimers associate to form the active enzyme. The cofactor is Ni cation. Carboxylation allows a single lysine to coordinate two nickel ions.

Its subcellular location is the cytoplasm. It catalyses the reaction urea + 2 H2O + H(+) = hydrogencarbonate + 2 NH4(+). It functions in the pathway nitrogen metabolism; urea degradation; CO(2) and NH(3) from urea (urease route): step 1/1. In Nostoc sp. (strain PCC 7120 / SAG 25.82 / UTEX 2576), this protein is Urease subunit alpha.